A 306-amino-acid polypeptide reads, in one-letter code: Ribonuclease Z (306 aa).

Zn(2+) contacts are provided by H63, H65, D67, H68, H141, D208, and H266. D67 acts as the Proton acceptor in catalysis.

Belongs to the RNase Z family. In terms of assembly, homodimer. Requires Zn(2+) as cofactor.

The enzyme catalyses Endonucleolytic cleavage of RNA, removing extra 3' nucleotides from tRNA precursor, generating 3' termini of tRNAs. A 3'-hydroxy group is left at the tRNA terminus and a 5'-phosphoryl group is left at the trailer molecule.. Its function is as follows. Zinc phosphodiesterase, which displays some tRNA 3'-processing endonuclease activity. Probably involved in tRNA maturation, by removing a 3'-trailer from precursor tRNA. The protein is Ribonuclease Z of Chlamydia abortus (strain DSM 27085 / S26/3) (Chlamydophila abortus).